A 513-amino-acid polypeptide reads, in one-letter code: Pantetheinase (513 aa).

An N-terminal signal peptide occupies residues 1–21 (MTTQLPAYVAILLFYVSRASC). Residue asparagine 38 is glycosylated (N-linked (GlcNAc...) asparagine). The CN hydrolase domain maps to 39–306 (ATLTPVSREE…GKLLLSQLDS (268 aa)). Glutamate 79 functions as the Proton acceptor in the catalytic mechanism. Residue asparagine 130 is glycosylated (N-linked (GlcNAc...) asparagine). Catalysis depends on lysine 178, which acts as the Proton donor. Asparagine 200 is a glycosylation site (N-linked (GlcNAc...) asparagine). The Nucleophile role is filled by cysteine 211. Residues asparagine 283, asparagine 315, and asparagine 353 are each glycosylated (N-linked (GlcNAc...) asparagine). The GPI-anchor amidated glycine moiety is linked to residue glycine 491. Residues 492–513 (LTAQARIIMLIVIAPIVCSLSW) constitute a propeptide, removed in mature form.

The protein belongs to the carbon-nitrogen hydrolase superfamily. BTD/VNN family. Monomer. As to expression, widely expressed with higher expression in spleen, kidney and blood. Overexpressed in lesional psoriatic skin.

The protein resides in the cell membrane. It carries out the reaction (R)-pantetheine + H2O = cysteamine + (R)-pantothenate. Amidohydrolase that hydrolyzes specifically one of the carboamide linkages in D-pantetheine thus recycling pantothenic acid (vitamin B5) and releasing cysteamine. This Homo sapiens (Human) protein is Pantetheinase (VNN1).